The primary structure comprises 460 residues: ATP synthase subunit beta (460 aa).

150–157 (GGAGVGKT) serves as a coordination point for ATP.

This sequence belongs to the ATPase alpha/beta chains family. F-type ATPases have 2 components, CF(1) - the catalytic core - and CF(0) - the membrane proton channel. CF(1) has five subunits: alpha(3), beta(3), gamma(1), delta(1), epsilon(1). CF(0) has three main subunits: a(1), b(2) and c(9-12). The alpha and beta chains form an alternating ring which encloses part of the gamma chain. CF(1) is attached to CF(0) by a central stalk formed by the gamma and epsilon chains, while a peripheral stalk is formed by the delta and b chains.

The protein resides in the cell inner membrane. It catalyses the reaction ATP + H2O + 4 H(+)(in) = ADP + phosphate + 5 H(+)(out). Produces ATP from ADP in the presence of a proton gradient across the membrane. The catalytic sites are hosted primarily by the beta subunits. This is ATP synthase subunit beta from Salmonella gallinarum (strain 287/91 / NCTC 13346).